Reading from the N-terminus, the 79-residue chain is U-myrmeciitoxin(01)-Mg9a (79 aa).

Positions 1 to 21 are cleaved as a signal peptide; that stretch reads MKLSCLLLTLAIIFVLTIVHA. Positions 22–48 are excised as a propeptide; the sequence is PNVEAKALANPESDAIGFADAVGEADP. At Gln78 the chain carries Glutamine amide.

Expressed by the venom gland.

Its subcellular location is the secreted. Its function is as follows. May have antimicrobial properties, like most ant linear peptides. The chain is U-myrmeciitoxin(01)-Mg9a from Myrmecia gulosa (Red bulldog ant).